The primary structure comprises 156 residues: Probable inactive ribonuclease-like protein 13 (156 aa).

An N-terminal signal peptide occupies residues 1–20 (MAPAVTRLLFLQLVLGPTLV). N-linked (GlcNAc...) asparagine glycosylation occurs at asparagine 126.

The protein belongs to the pancreatic ribonuclease family.

Its subcellular location is the secreted. In terms of biological role, does not exhibit any ribonuclease activity. This Homo sapiens (Human) protein is Probable inactive ribonuclease-like protein 13 (RNASE13).